Here is a 209-residue protein sequence, read N- to C-terminus: Urease accessory protein UreG (209 aa).

18 to 25 contributes to the GTP binding site; sequence GPVGSGKT.

The protein belongs to the SIMIBI class G3E GTPase family. UreG subfamily. Homodimer. UreD, UreF and UreG form a complex that acts as a GTP-hydrolysis-dependent molecular chaperone, activating the urease apoprotein by helping to assemble the nickel containing metallocenter of UreC. The UreE protein probably delivers the nickel.

The protein localises to the cytoplasm. Facilitates the functional incorporation of the urease nickel metallocenter. This process requires GTP hydrolysis, probably effectuated by UreG. This chain is Urease accessory protein UreG, found in Cupriavidus pinatubonensis (strain JMP 134 / LMG 1197) (Cupriavidus necator (strain JMP 134)).